The chain runs to 166 residues: CDP-archaeol synthase (166 aa).

4 helical membrane-spanning segments follow: residues 42–62, 73–93, 104–124, and 128–148; these read FFGG…AATA, FLSV…KSFL, SWFL…ILIF, and WLFG…TPLL.

Belongs to the CDP-archaeol synthase family. Requires Mg(2+) as cofactor.

It localises to the cell membrane. It catalyses the reaction 2,3-bis-O-(geranylgeranyl)-sn-glycerol 1-phosphate + CTP + H(+) = CDP-2,3-bis-O-(geranylgeranyl)-sn-glycerol + diphosphate. It functions in the pathway membrane lipid metabolism; glycerophospholipid metabolism. Functionally, catalyzes the formation of CDP-2,3-bis-(O-geranylgeranyl)-sn-glycerol (CDP-archaeol) from 2,3-bis-(O-geranylgeranyl)-sn-glycerol 1-phosphate (DGGGP) and CTP. This reaction is the third ether-bond-formation step in the biosynthesis of archaeal membrane lipids. This chain is CDP-archaeol synthase, found in Methanoculleus marisnigri (strain ATCC 35101 / DSM 1498 / JR1).